The primary structure comprises 24 residues: Brevinin-1JDb (24 aa).

Cys-18 and Cys-24 are oxidised to a cystine.

In terms of tissue distribution, expressed by the skin glands.

The protein resides in the secreted. Its function is as follows. Has antibacterial activity against E.coli and S.aureus strains. Has antifungal activity against C.albicans. Has hemolytic activity against rabbit erythrocytes. The chain is Brevinin-1JDb from Odorrana jingdongensis (Jingdong frog).